The chain runs to 806 residues: DNA topoisomerase 1 (806 aa).

Over residues 1–15 the composition is skewed to low complexity; the sequence is MSVVSNHHSNGNGNS. Residues 1–236 form a disordered region; that stretch reads MSVVSNHHSN…KKEPPKKKVK (236 aa). The segment covering 24–34 has biased composition (basic and acidic residues); sequence DEIKKEVKDEP. Composition is skewed to basic residues over residues 49–60 and 98–108; these read RDKKEKKQKKRK and EKKKSKKNNKK. The segment covering 113-127 has biased composition (acidic residues); that stretch reads SSEDDDEESEGDVSE. Basic and acidic residues predominate over residues 128–137; that stretch reads EDVKPQIHSD. Positions 138–153 are enriched in acidic residues; sequence DELEEEDEAPTTDDEE. Positions 159 to 176 are enriched in basic residues; it reads EKERRKKEKREKKERKEK. The span at 177-188 shows a compositional bias: basic and acidic residues; it reads KRLEKENRKIKE. A compositionally biased stretch (acidic residues) spans 189-199; the sequence is EDDEDSDDEDD. Basic and acidic residues predominate over residues 210 to 229; sequence KGAEKSKPSTSKKDAGGKKE. Interaction with DNA regions lie at residues 467-468, 530-535, and 634-636; these read KY, RAGNEK, and TVK. Residues 474 to 803 enclose the Topo IB-type catalytic domain; it reads SSKIKGEKDF…IDMTNSSDEE (330 aa). Residue tyrosine 761 is the O-(3'-phospho-DNA)-tyrosine intermediate of the active site.

The protein belongs to the type IB topoisomerase family. As to expression, expressed in male germ cells and in mature sperm.

The protein resides in the nucleus. It is found in the nucleolus. It localises to the chromosome. The enzyme catalyses ATP-independent breakage of single-stranded DNA, followed by passage and rejoining.. Functionally, releases the supercoiling and torsional tension of DNA introduced during the DNA replication and transcription by transiently cleaving and rejoining one strand of the DNA duplex. Introduces a single-strand break via transesterification at a target site in duplex DNA. The scissile phosphodiester is attacked by the catalytic tyrosine of the enzyme, resulting in the formation of a DNA-(3'-phosphotyrosyl)-enzyme intermediate and the expulsion of a 5'-OH DNA strand. The free DNA strand then rotates around the intact phosphodiester bond on the opposing strand, thus removing DNA supercoils. Finally, in the religation step, the DNA 5'-OH attacks the covalent intermediate to expel the active-site tyrosine and restore the DNA phosphodiester backbone. Required for normal spermatogenesis and oogenesis. This chain is DNA topoisomerase 1 (top-1), found in Caenorhabditis elegans.